The chain runs to 488 residues: R3H and coiled-coil domain-containing protein 1 (488 aa).

In terms of domain architecture, R3H spans 16–81 (NDFVHRVQEE…KRRTVICHLD (66 aa)). 2 disordered regions span residues 87 to 180 (SDGP…GDAE) and 195 to 322 (KSPD…DADH). Over residues 114–125 (GAAAGPRGAPAG) the composition is skewed to low complexity. Serine 232 is modified (phosphoserine). Residues 244–321 (SHGMRSLVDQ…EEDEDEADAD (78 aa)) adopt a coiled-coil conformation. Over residues 252-265 (DQEEEEIEGEEEEK) the composition is skewed to acidic residues. Composition is skewed to basic and acidic residues over residues 266-280 (VDEKEEDTGKQKERV) and 287-301 (TDAQEGKVDSEGERM). Acidic residues predominate over residues 302–319 (DEGEDKVDAEEEDEDEAD).

The sequence is that of R3H and coiled-coil domain-containing protein 1 from Mus musculus (Mouse).